We begin with the raw amino-acid sequence, 428 residues long: Ectonucleoside triphosphate diphosphohydrolase 5 (428 aa).

Positions 1–24 (MTSSRLPVLLALVFSSLSPVLSHS) are cleaved as a signal peptide. Glu172 acts as the Proton acceptor in catalysis. An N-linked (GlcNAc...) asparagine glycan is attached at Asn232. Intrachain disulfides connect Cys272-Cys303 and Cys363-Cys377.

This sequence belongs to the GDA1/CD39 NTPase family. As to quaternary structure, monomer; active form. Homodimer; disulfide-linked. Homodimers are enzymatically inactive. Requires Ca(2+) as cofactor. Mg(2+) serves as cofactor.

The protein resides in the endoplasmic reticulum. It is found in the secreted. It carries out the reaction a ribonucleoside 5'-diphosphate + H2O = a ribonucleoside 5'-phosphate + phosphate + H(+). It catalyses the reaction GDP + H2O = GMP + phosphate + H(+). The enzyme catalyses UDP + H2O = UMP + phosphate + H(+). The catalysed reaction is IDP + H2O = IMP + phosphate + H(+). It carries out the reaction CDP + H2O = CMP + phosphate + H(+). It catalyses the reaction ADP + H2O = AMP + phosphate + H(+). It functions in the pathway protein modification; protein glycosylation. In terms of biological role, hydrolyzes nucleoside diphosphates with a preference for GDP, IDP and UDP compared to ADP and CDP. In the lumen of the endoplasmic reticulum, hydrolyzes UDP that acts as an end-product feedback inhibitor of the UDP-Glc:glycoprotein glucosyltransferases. UMP can be transported back by an UDP-sugar antiporter to the cytosol where it is consumed to regenerate UDP-glucose. Therefore, it positively regulates protein reglucosylation by clearing UDP from the ER lumen and by promoting the regeneration of UDP-glucose. Protein reglucosylation is essential to proper glycoprotein folding and quality control in the ER. This is Ectonucleoside triphosphate diphosphohydrolase 5 (ENTPD5) from Gallus gallus (Chicken).